The sequence spans 279 residues: Fatty acid metabolism regulator protein (279 aa).

Positions 6 to 74 (KSPAGFAEKY…HGKPTKVNQF (69 aa)) constitute an HTH gntR-type domain. A DNA-binding region (H-T-H motif) is located at residues 34–53 (ERELSELIGVTRTTLREVLQ).

In terms of assembly, homodimer.

It localises to the cytoplasm. Multifunctional regulator of fatty acid metabolism. The polypeptide is Fatty acid metabolism regulator protein (Vibrio cholerae serotype O1 (strain ATCC 39541 / Classical Ogawa 395 / O395)).